The sequence spans 316 residues: Acetaldehyde dehydrogenase (316 aa).

11-14 (SGNI) is an NAD(+) binding site. Cys-131 (acyl-thioester intermediate) is an active-site residue. Residues 162 to 170 (SAGPGTRAN) and Asn-289 each bind NAD(+).

Belongs to the acetaldehyde dehydrogenase family. As to quaternary structure, interacts with MhpE.

It catalyses the reaction acetaldehyde + NAD(+) + CoA = acetyl-CoA + NADH + H(+). The protein operates within aromatic compound metabolism; 3-phenylpropanoate degradation. Functionally, catalyzes the conversion of acetaldehyde to acetyl-CoA, using NAD(+) and coenzyme A. Is the final enzyme in the meta-cleavage pathway for the degradation of aromatic compounds. The protein is Acetaldehyde dehydrogenase of Klebsiella pneumoniae subsp. pneumoniae (strain ATCC 700721 / MGH 78578).